A 1407-amino-acid polypeptide reads, in one-letter code: Clustered mitochondria protein (1407 aa).

Residues 1 to 12 (MAGKSNKSKAKR) show a composition bias toward basic residues. Disordered regions lie at residues 1-36 (MAGK…PVAA) and 83-103 (IPKA…PKQG). Polar residues predominate over residues 14–24 (AQSTTTNSTTD). The Clu domain maps to 384-670 (PDHKRDAARA…RVTPRDANYT (287 aa)). The segment at 724–760 (IDGEANGASNSDQKSISDKQNTTAEDYAAGSSESSKS) is disordered. A compositionally biased stretch (polar residues) spans 730 to 747 (GASNSDQKSISDKQNTTA). 5 TPR repeats span residues 1025–1058 (AKDL…LQQV), 1067–1100 (ANCC…NERC), 1109–1142 (AHSY…LGLS), 1151–1184 (AATF…NERL), and 1193–1226 (AVCY…LVKQ). The tract at residues 1358–1407 (VSSEKGGENGEAKVQEKKESSENGKTENLAPAGLGAGLTSLDKKKQKAKK) is disordered. Basic and acidic residues predominate over residues 1362–1382 (KGGENGEAKVQEKKESSENGK).

This sequence belongs to the CLU family.

Its subcellular location is the cytoplasm. Functionally, mRNA-binding protein involved in proper cytoplasmic distribution of mitochondria. Together with REC2, REC3 and FMT/CLU, contributes to the establishment of the cellular volume devoted to the chloroplast compartment. The chain is Clustered mitochondria protein from Arabidopsis thaliana (Mouse-ear cress).